The following is a 2359-amino-acid chain: Pre-mRNA-processing-splicing factor 8B (2359 aa).

A disordered region spans residues 1-50 (MWNIDGTSLAPPGTDGSRMQTPSHPADHPSYTAPSNRNTPTVPTPEDAEA). Positions 32–41 (TAPSNRNTPT) are enriched in polar residues. The 132-residue stretch at 2129 to 2260 (TYIMPKNILK…LTSYKLTQAG (132 aa)) folds into the MPN domain.

The protein resides in the nucleus. Functions as a scaffold that mediates the ordered assembly of spliceosomal proteins and snRNAs. Required for the assembly of the U4/U6-U5 tri-snRNP complex. This chain is Pre-mRNA-processing-splicing factor 8B, found in Arabidopsis thaliana (Mouse-ear cress).